The chain runs to 212 residues: RNA chaperone ProQ (212 aa).

Basic and acidic residues-rich tracts occupy residues 102 to 124 (ALKESKERVFASRRTNTKEEKAK) and 132 to 144 (RKADAAAKSDKPK). The interval 102–149 (ALKESKERVFASRRTNTKEEKAKQPRRPAPRKADAAAKSDKPKAAPKA) is disordered.

The protein belongs to the ProQ family.

Its subcellular location is the cytoplasm. RNA chaperone with significant RNA binding, RNA strand exchange and RNA duplexing activities. The chain is RNA chaperone ProQ from Aeromonas hydrophila subsp. hydrophila (strain ATCC 7966 / DSM 30187 / BCRC 13018 / CCUG 14551 / JCM 1027 / KCTC 2358 / NCIMB 9240 / NCTC 8049).